The sequence spans 783 residues: Rho GTPase-activating protein gacR (783 aa).

A coiled-coil region spans residues 138–188 (AKNRFDKARLSFDEASEQFKQLRKKQNNINNEKLLEAEEDLDYATQQFSDI). The interval 262-299 (QFEQTNSSRTISLPPPPPPKPTSSTPSSSPSPSPSSSI) is disordered. Positions 283 to 299 (TSSTPSSSPSPSPSSSI) are enriched in low complexity. Residues 319–509 (MALSTITERE…FIISNFNNIF (191 aa)) enclose the Rho-GAP domain. The span at 527-539 (GSSGGGGGGGSSG) shows a compositional bias: gly residues. Positions 527–745 (GSSGGGGGGG…TTNSRPLSNS (219 aa)) are disordered. 4 stretches are compositionally biased toward low complexity: residues 568–589 (SVNTSSSQSSSSSSSSSFASSA), 599–630 (PSSSSSPIITTTSPNSNTNINSNTSVNTNINP), 641–651 (PKKISSSSNSL), and 661–698 (SIPEKSQNNITPTILSSSLSAPTSPTTTTTTNPLRSST). The segment covering 706–738 (NRVSMYLQNSNTGVPLPSQKPQRVISNNNTTTN) has biased composition (polar residues).

Its subcellular location is the cytoplasm. Rho GTPase-activating protein involved in the signal transduction pathway. This is Rho GTPase-activating protein gacR (gacR) from Dictyostelium discoideum (Social amoeba).